Consider the following 176-residue polypeptide: R-phycoerythrin beta chain (176 aa).

Phycourobilin contacts are provided by Cys50 and Cys61. The residue at position 72 (Asn72) is an N4-methylasparagine. Positions 82 and 158 each coordinate (2R,3E)-phycoerythrobilin.

It belongs to the phycobiliprotein family. As to quaternary structure, heterodimer of an alpha and a beta chain. Contains two covalently linked phycoerythrobilin chromophores and one covalently linked phycourobilin chromophore.

The protein localises to the plastid. It localises to the chloroplast thylakoid membrane. In terms of biological role, light-harvesting photosynthetic bile pigment-protein from the phycobiliprotein complex. The chain is R-phycoerythrin beta chain (cpeB) from Aglaothamnion neglectum (Red alga).